A 516-amino-acid polypeptide reads, in one-letter code: Protein phosphatase 1H (516 aa).

Disordered stretches follow at residues 102 to 122 and 181 to 202; these read ADPSSVSYTPSRRRSSLPSGD and PPTCLGEESPNPQLHASASGSQ. Positions 106-506 constitute a PPM-type phosphatase domain; sequence SVSYTPSRRR…DDISVFIIPL (401 aa). A compositionally biased stretch (polar residues) spans 190-202; sequence PNPQLHASASGSQ.

It belongs to the PP2C family.

Its subcellular location is the nucleus. The protein resides in the cytoplasm. The catalysed reaction is O-phospho-L-seryl-[protein] + H2O = L-seryl-[protein] + phosphate. The enzyme catalyses O-phospho-L-threonyl-[protein] + H2O = L-threonyl-[protein] + phosphate. The sequence is that of Protein phosphatase 1H (ppm1h) from Danio rerio (Zebrafish).